Consider the following 132-residue polypeptide: Agouti-signaling protein (132 aa).

The signal sequence occupies residues 1-22 (MDVTRLLLATLLVFLCFFTVYS). Asn-39 is a glycosylation site (N-linked (GlcNAc...) asparagine). A disordered region spans residues 61-87 (HISRKEAEKKRSSKKEASMKKVARPRT). Residues 64-79 (RKEAEKKRSSKKEASM) show a composition bias toward basic and acidic residues. 5 cysteine pairs are disulfide-bonded: Cys-93–Cys-108, Cys-100–Cys-114, Cys-107–Cys-125, Cys-111–Cys-132, and Cys-116–Cys-123. Positions 93 to 132 (CVATRDSCKPPAPACCDPCASCQCRFFRSACSCRVLSLNC) constitute an Agouti domain.

It localises to the secreted. Its function is as follows. Involved in the regulation of melanogenesis. The binding of ASP to MC1R precludes alpha-MSH initiated signaling and thus blocks production of cAMP, leading to a down-regulation of eumelanogenesis (brown/black pigment) and thus increasing synthesis of pheomelanin (yellow/red pigment). The chain is Agouti-signaling protein (ASIP) from Colobus polykomos (Western black-and-white colobus monkey).